The following is a 596-amino-acid chain: Fructan 1-exohydrolase (596 aa).

The signal sequence occupies residues 1–20; it reads MAQAWAFLLPVLVLGSYVTS. Aspartate 75 is a catalytic residue. Asparagine 168, asparagine 236, and asparagine 248 each carry an N-linked (GlcNAc...) asparagine glycan. Cysteine 446 and cysteine 492 are joined by a disulfide. Residue asparagine 567 is glycosylated (N-linked (GlcNAc...) asparagine).

This sequence belongs to the glycosyl hydrolase 32 family.

The catalysed reaction is Hydrolysis of terminal, non-reducing (2-&gt;1)-linked beta-D-fructofuranose residues in fructans.. With respect to regulation, inhibited by sucrose. In terms of biological role, hydrolyzes inulin-type beta-(2,1)-fructans. May play a role as a beta-(2,1)-trimmer during graminan biosynthesis. The polypeptide is Fructan 1-exohydrolase (Aegilops tauschii (Tausch's goatgrass)).